We begin with the raw amino-acid sequence, 199 residues long: MSEKPEKIVLASGNAGKLKEFGNLFEPYGITVLPQSEFSIPECPEPYSTFVENALAKARHAAGHSGLPALADDSGICAAALNGAPGIHSARYAGSNPKSDTANNLKLAAELAGKADKSCCYVCVLVFVRHKDDPRPIIAEGVWHGQWNGVPAGENGFGYDPYFYLPGHGKTAAELDSEVKNRESHRAQALAELLRKLAL.

12–17 (SGNAGK) contacts substrate. Asp73 (proton acceptor) is an active-site residue. A Mg(2+)-binding site is contributed by Asp73. Substrate is bound by residues Ser74, 157–160 (FGYD), Lys180, and 185–186 (HR).

This sequence belongs to the HAM1 NTPase family. Homodimer. Mg(2+) serves as cofactor.

It catalyses the reaction XTP + H2O = XMP + diphosphate + H(+). The enzyme catalyses dITP + H2O = dIMP + diphosphate + H(+). It carries out the reaction ITP + H2O = IMP + diphosphate + H(+). Its function is as follows. Pyrophosphatase that catalyzes the hydrolysis of nucleoside triphosphates to their monophosphate derivatives, with a high preference for the non-canonical purine nucleotides XTP (xanthosine triphosphate), dITP (deoxyinosine triphosphate) and ITP. Seems to function as a house-cleaning enzyme that removes non-canonical purine nucleotides from the nucleotide pool, thus preventing their incorporation into DNA/RNA and avoiding chromosomal lesions. The sequence is that of dITP/XTP pyrophosphatase from Neisseria meningitidis serogroup A / serotype 4A (strain DSM 15465 / Z2491).